The following is a 46-amino-acid chain: Iota-conotoxin RXIA (46 aa).

4-hydroxyproline; partial is present on residues Pro2 and Pro11. Intrachain disulfides connect Cys5/Cys19, Cys12/Cys22, Cys18/Cys27, and Cys21/Cys38. Pro29 is subject to 4-hydroxyproline. Phe44 carries the post-translational modification D-phenylalanine.

It belongs to the conotoxin I1 superfamily. The natural D-Phe-44 form of the peptide is more potent than the L-Phe-44 form. As to expression, expressed by the venom duct.

It is found in the secreted. In terms of biological role, iota-conotoxins bind to voltage-gated sodium channels and act as agonists by shifting the voltage-dependence of activation to more hyperpolarized levels. This toxin acts on Nav1.6/SCN8A &gt; Nav1.2/SCN2A &gt; Nav1.7/SCN9A sodium channels. Produces general excitatory symptoms upon intracorporeal injection and repetitive action potentials in the frog cutaneous pectoris muscle. Natural peptide (with D-Phe) is active on nerve, but not on muscle. Synthetic peptide (with L-Phe) is not active on both nerve and muscle. The chain is Iota-conotoxin RXIA from Conus radiatus (Rayed cone).